The sequence spans 239 residues: Ubiquinone biosynthesis O-methyltransferase (239 aa).

Residues Arg-44, Gly-63, Asp-84, and Met-128 each coordinate S-adenosyl-L-methionine.

The protein belongs to the methyltransferase superfamily. UbiG/COQ3 family.

It catalyses the reaction a 3-demethylubiquinol + S-adenosyl-L-methionine = a ubiquinol + S-adenosyl-L-homocysteine + H(+). The enzyme catalyses a 3-(all-trans-polyprenyl)benzene-1,2-diol + S-adenosyl-L-methionine = a 2-methoxy-6-(all-trans-polyprenyl)phenol + S-adenosyl-L-homocysteine + H(+). It functions in the pathway cofactor biosynthesis; ubiquinone biosynthesis. Its function is as follows. O-methyltransferase that catalyzes the 2 O-methylation steps in the ubiquinone biosynthetic pathway. The protein is Ubiquinone biosynthesis O-methyltransferase of Xanthomonas oryzae pv. oryzae (strain MAFF 311018).